A 778-amino-acid polypeptide reads, in one-letter code: Preaspterpenacid I synthase sttA (778 aa).

A sesterterpenoid synthase region spans residues 4–359 (ISDVMKHCVP…RYHRTDLATT (356 aa)). D105 lines the Mg(2+) pocket. Residue D105 participates in substrate binding. The interval 211–214 (RVNE) is substrate. N255 contributes to the substrate binding site. 2 substrate regions span residues 259–263 (SFPKE) and 350–351 (RY). The segment at 360 to 774 (AEDRATLIGK…RMMLLGMGPK (415 aa)) is geranylfarneyl diphosphate synthase. Positions 423 to 445 (AFKKSNPRNGKQNGTEGSKGTFT) are disordered. Positions 429 to 445 (PRNGKQNGTEGSKGTFT) are enriched in polar residues. 3 residues coordinate isopentenyl diphosphate: K493, R496, and H525. 2 residues coordinate Mg(2+): D532 and D536. R541 contributes to the dimethylallyl diphosphate binding site. Position 542 (R542) interacts with isopentenyl diphosphate. 5 residues coordinate dimethylallyl diphosphate: K619, T620, Q657, N664, and K674.

The protein in the N-terminal section; belongs to the terpene synthase family. It in the C-terminal section; belongs to the FPP/GGPP synthase family.

The catalysed reaction is 4 isopentenyl diphosphate + dimethylallyl diphosphate = (2E,6E,10E,14E)-geranylfarnesyl diphosphate + 4 diphosphate. The enzyme catalyses (2E,6E,10E,14E)-geranylfarnesyl diphosphate + H2O = preaspterpenacid acid I + diphosphate. The protein operates within secondary metabolite biosynthesis; terpenoid biosynthesis. In terms of biological role, sesterterpenoid synthase; part of the gene cluster that mediates the biosynthesis of aspterpenacids. Performs both prenyl transferase and terpene cyclase activity, converting isopentenyl diphosphate and dimethylallyl diphosphate into geranylfarnesyl diphosphate (GFPP) and then converting GFPP into preaspterpenacid I. C22-oxidative modification of preaspterpenacid I by the cytochrome P450 monooxygenase sttB then leads to preaspterpenacid II. It has still to be determined how preaspterpenacid II is further modified to produce aspterpenacids. This Aspergillus terreus protein is Preaspterpenacid I synthase sttA.